The chain runs to 1070 residues: Carbamoyl phosphate synthase large chain (1070 aa).

A carboxyphosphate synthetic domain region spans residues 1 to 401; it reads MPKRDDIKTI…ALLKAVRSLE (401 aa). Positions 129, 169, 175, 176, 208, 210, 215, 241, 242, 243, 284, and 298 each coordinate ATP. The 195-residue stretch at 133–327 folds into the ATP-grasp 1 domain; sequence RDLMNELGEP…IAKLAAKIAV (195 aa). Q284, E298, and N300 together coordinate Mg(2+). Q284, E298, and N300 together coordinate Mn(2+). The oligomerization domain stretch occupies residues 402 to 546; that stretch reads IGADHLLLEE…YSTYEEENES (145 aa). Residues 547–929 are carbamoyl phosphate synthetic domain; that stretch reads TRSAKESVIV…ALYKGFVASG (383 aa). The ATP-grasp 2 domain occupies 671 to 861; the sequence is EKALEILQIP…MANVATRVIL (191 aa). R707, R746, V748, E752, G777, V778, H779, S780, Q820, and E832 together coordinate ATP. Mg(2+)-binding residues include Q820, E832, and N834. Residues Q820, E832, and N834 each contribute to the Mn(2+) site. An MGS-like domain is found at 930-1070; it reads TTMHDYGTVL…SEVKQPKARV (141 aa). Residues 930–1070 are allosteric domain; it reads TTMHDYGTVL…SEVKQPKARV (141 aa).

The protein belongs to the CarB family. As to quaternary structure, composed of two chains; the small (or glutamine) chain promotes the hydrolysis of glutamine to ammonia, which is used by the large (or ammonia) chain to synthesize carbamoyl phosphate. Tetramer of heterodimers (alpha,beta)4. The cofactor is Mg(2+). Mn(2+) serves as cofactor.

The catalysed reaction is hydrogencarbonate + L-glutamine + 2 ATP + H2O = carbamoyl phosphate + L-glutamate + 2 ADP + phosphate + 2 H(+). It carries out the reaction hydrogencarbonate + NH4(+) + 2 ATP = carbamoyl phosphate + 2 ADP + phosphate + 2 H(+). The protein operates within amino-acid biosynthesis; L-arginine biosynthesis; carbamoyl phosphate from bicarbonate: step 1/1. It functions in the pathway pyrimidine metabolism; UMP biosynthesis via de novo pathway; (S)-dihydroorotate from bicarbonate: step 1/3. Its function is as follows. Large subunit of the glutamine-dependent carbamoyl phosphate synthetase (CPSase). CPSase catalyzes the formation of carbamoyl phosphate from the ammonia moiety of glutamine, carbonate, and phosphate donated by ATP, constituting the first step of 2 biosynthetic pathways, one leading to arginine and/or urea and the other to pyrimidine nucleotides. The large subunit (synthetase) binds the substrates ammonia (free or transferred from glutamine from the small subunit), hydrogencarbonate and ATP and carries out an ATP-coupled ligase reaction, activating hydrogencarbonate by forming carboxy phosphate which reacts with ammonia to form carbamoyl phosphate. The sequence is that of Carbamoyl phosphate synthase large chain from Listeria monocytogenes serotype 4b (strain F2365).